A 379-amino-acid chain; its full sequence is MEGNRDEAEKCVEIAREALNAGNREKAQRFLQKAEKLYPLPSARALLEIIMKNGSTAGNSPHCRKPSGSGDQSKPNCTKDSTSGSGEGGKGYTKDQVDGVLSINKCKNYYEVLGVTKDAGDEDLKKAYRKLALKFHPDKNHAPGATDAFKKIGNAYAVLSNPEKRKQYDLTGNEEQACNHQNNGRFNFHRGCEADITPEDLFNIFFGGGFPSGSVHSFSNGRAGYSQQHQHRHSGHEREEERGDGGFSVFIQLMPIIVLILVSLLSQLMVSNPPYSLYPRSGTGQTIKMQTENLGVVYYVNKDFKNEYKGMLLQKVEKSVEEDYVTNIRNNCWKERQQKTDMQYAAKVYRDDRLRRKADALSMDNCKELERLTSLYKGG.

At 1–244 the chain is on the cytoplasmic side; it reads MEGNRDEAEK…GHEREEERGD (244 aa). The interval 55–94 is disordered; sequence STAGNSPHCRKPSGSGDQSKPNCTKDSTSGSGEGGKGYTK. The span at 69–84 shows a compositional bias: polar residues; that stretch reads SGDQSKPNCTKDSTSG. In terms of domain architecture, J spans 108 to 172; sequence NYYEVLGVTK…EKRKQYDLTG (65 aa). Positions 219-241 are disordered; the sequence is SNGRAGYSQQHQHRHSGHEREEE. Residues 245-265 traverse the membrane as a helical segment; that stretch reads GGFSVFIQLMPIIVLILVSLL. At 266–379 the chain is on the lumenal side; that stretch reads SQLMVSNPPY…ERLTSLYKGG (114 aa).

This sequence belongs to the DnaJ family. DNAJB12/DNAJB14 subfamily. As to quaternary structure, interacts (via J domain) with HSPA8/Hsc70. Forms a multiprotein complex, at least composed of DNAJB12, DNAJB14, HSPA8/Hsc70 and SGTA; interaction with DNAJB14 and HSPA8/Hsc70 is direct.

The protein localises to the endoplasmic reticulum membrane. Its subcellular location is the nucleus membrane. Acts as a co-chaperone with HSPA8/Hsc70; required to promote protein folding and trafficking, prevent aggregation of client proteins, and promote unfolded proteins to endoplasmic reticulum-associated degradation (ERAD) pathway. Acts by determining HSPA8/Hsc70's ATPase and polypeptide-binding activities. Can also act independently of HSPA8/Hsc70: together with DNAJB12, acts as a chaperone that promotes maturation of potassium channels KCND2 and KCNH2 by stabilizing nascent channel subunits and assembling them into tetramers. While stabilization of nascent channel proteins is dependent on HSPA8/Hsc70, the process of oligomerization of channel subunits is independent of HSPA8/Hsc70. When overexpressed, forms membranous structures together with DNAJB12 and HSPA8/Hsc70 within the nucleus; the role of these structures, named DJANGOs, is still unclear. In terms of biological role, (Microbial infection) In case of infection by polyomavirus, involved in the virus endoplasmic reticulum membrane penetration and infection. The polypeptide is DnaJ homolog subfamily B member 14 (Homo sapiens (Human)).